The following is a 540-amino-acid chain: Intestinal-type alkaline phosphatase 1 (540 aa).

The first 20 residues, M1–G20, serve as a signal peptide directing secretion. Position 62 (D62) interacts with Mg(2+). Zn(2+) contacts are provided by D62 and S112. S112 acts as the Phosphoserine intermediate in catalysis. An intrachain disulfide couples C141 to C203. N142 is a glycosylation site (N-linked (GlcNAc...) asparagine). S175 is a Mg(2+) binding site. 3 residues coordinate Ca(2+): E236, F289, and E290. N301 carries an N-linked (GlcNAc...) asparagine glycan. D305 contributes to the Ca(2+) binding site. Position 331 (E331) interacts with Mg(2+). The Zn(2+) site is built by D336, H340, D377, and H378. N428 carries N-linked (GlcNAc...) asparagine glycosylation. H452 contacts Zn(2+). Residues C487 and C494 are joined by a disulfide bond. Residue N511 is the site of GPI-anchor amidated asparagine attachment. Positions S512–S540 are cleaved as a propeptide — removed in mature form.

The protein belongs to the alkaline phosphatase family. In terms of assembly, homodimer. It depends on Mg(2+) as a cofactor. Requires Zn(2+) as cofactor. Ca(2+) serves as cofactor.

Its subcellular location is the cell membrane. It carries out the reaction a phosphate monoester + H2O = an alcohol + phosphate. Its function is as follows. Alkaline phosphatase that can hydrolyze various phosphate compounds. This is Intestinal-type alkaline phosphatase 1 (Alpi) from Rattus norvegicus (Rat).